The following is a 274-amino-acid chain: 3-methyl-2-oxobutanoate hydroxymethyltransferase (274 aa).

Positions 49 and 88 each coordinate Mg(2+). Residues 49 to 50, Asp-88, and Lys-118 each bind 3-methyl-2-oxobutanoate; that span reads DS. A Mg(2+)-binding site is contributed by Glu-120. The active-site Proton acceptor is Glu-187.

The protein belongs to the PanB family. In terms of assembly, homodecamer; pentamer of dimers. Requires Mg(2+) as cofactor.

Its subcellular location is the cytoplasm. The catalysed reaction is 3-methyl-2-oxobutanoate + (6R)-5,10-methylene-5,6,7,8-tetrahydrofolate + H2O = 2-dehydropantoate + (6S)-5,6,7,8-tetrahydrofolate. It participates in cofactor biosynthesis; (R)-pantothenate biosynthesis; (R)-pantoate from 3-methyl-2-oxobutanoate: step 1/2. Functionally, catalyzes the reversible reaction in which hydroxymethyl group from 5,10-methylenetetrahydrofolate is transferred onto alpha-ketoisovalerate to form ketopantoate. The chain is 3-methyl-2-oxobutanoate hydroxymethyltransferase from Rhodopseudomonas palustris (strain BisB5).